The primary structure comprises 453 residues: MKGFTKHSILMACSIGLAINATAADWDNIPIPAELDAGQSWELQQNYSDSFNYSGKNSTFTGKWKDSYFHSWTGPGLTHWSSDESWVGDGNLIISASRRQGTNKVNAGVITSKTKVKYPIFLEASIKVSNLELSSNFWLLSENDQREIDVLEVYGGARQDWYAKNMSTNFHVFFRNNDNSIKNDYNDQTHFTPTWGNYWRDGFHRFGVYWKSPTDVTFYIDGQKTTKGAWSQVVMKDKDYTGAILDKSRYNMDQEAFIIIDTEDHSWRSEAGHIATDADLADSDKNKMYVDWIRVYKPTGGSTTPPTGDITPPSGYTNLQLAHSNRCVDVINGALWNGSTYQQYSCNTGNNNQRFKFTKIANNQYSINAKVSQLCMELASGSSANGAKVQQWICNHANSNQTWSLEDKGSNTFEIRNKQSGKCLEVANSSNANGGQIRQWACTGATNQRFKFL.

The signal sequence occupies residues 1–23 (MKGFTKHSILMACSIGLAINATA). Residues 24–301 (ADWDNIPIPA…WIRVYKPTGG (278 aa)) enclose the GH16 domain. Glu-147 serves as the catalytic Nucleophile. The Proton donor role is filled by Glu-152. One can recognise a Ricin B-type lectin domain in the interval 313–453 (PSGYTNLQLA…GATNQRFKFL (141 aa)). 3 cysteine pairs are disulfide-bonded: Cys-327-Cys-346, Cys-375-Cys-394, and Cys-423-Cys-442.

Belongs to the glycosyl hydrolase 16 family.

The protein resides in the secreted. The enzyme catalyses Hydrolysis of (1-&gt;4)-beta-D-galactosidic linkages in agarose, giving the tetramer as the predominant product.. This is Beta-agarase AgaB34 from Agarivorans albus.